Reading from the N-terminus, the 1503-residue chain is Translocase of chloroplast 159, chloroplastic (1503 aa).

Residues 1 to 24 show a composition bias toward polar residues; it reads MDSKSVTPEPTNPFYASSGQSGKT. Residues 1–210 are disordered; that stretch reads MDSKSVTPEP…GGKVDVDDKS (210 aa). The chain crosses the membrane as a helical span at residues 21–37; it reads SGKTYASVVAAAAAAAA. Position 71 is a phosphoserine (S71). Composition is skewed to basic and acidic residues over residues 85–98 and 176–210; these read KVSD…KEDS and SESK…DDKS. 3 positions are modified to phosphoserine: S210, S281, and S288. Disordered stretches follow at residues 298-338 and 429-464; these read KFTS…DVEK and VHNK…SEGD. A compositionally biased stretch (basic and acidic residues) spans 447–456; the sequence is ESDKATEEGG. A phosphoserine mark is found at S448, S461, S589, S609, S630, S632, and S665. Positions 610–633 are disordered; the sequence is FGGKEVDQEPSGEGVTRVDGSESE. A coiled-coil region spans residues 781-804; it reads EEEKQKLEKLQSLRVKFLRLLQRL. An AIG1-type G domain is found at 853 to 1087; the sequence is IFSLNILVLG…RPQEPLDHRK (235 aa). The interval 862-869 is G1; that stretch reads GKAGVGKS. Residues 865–870 and 884–889 each bind GTP; these read GVGKSA and DAFGLS. S869 contributes to the Mg(2+) binding site. The tract at residues 884 to 887 is homodimerization; the sequence is DAFG. The segment at 889 to 893 is G2; the sequence is STTSV. The tract at residues 909-912 is G3; it reads DTPG. The tract at residues 947–952 is homodimerization; sequence RLDTQT. The tract at residues 981 to 984 is G4; it reads THAA. GTP is bound by residues H982 and 1035–1036; that span reads EN. The interval 1035–1037 is G5; the sequence is ENH. Positions 1175–1203 form a coiled coil; it reads DYRVKLLQKKQWREELKRMKEMKKNGKKL. The tract at residues 1203–1222 is disordered; that stretch reads LGESEFGYPGEEDDPENGAP.

This sequence belongs to the TRAFAC class TrmE-Era-EngA-EngB-Septin-like GTPase superfamily. AIG1/Toc34/Toc159-like paraseptin GTPase family. TOC159 subfamily. As to quaternary structure, homodimer and heterodimer with TOC33. Part of the TOC core complex that includes 1 protein for the specific recognition of transit peptides surrounded by a ring composed of four proteins forming translocation channels, and four to five GTP-binding proteins providing energy. This core complex can interact with components of the TIC complex to form a larger import complex. Chloroplastic protein precursor such as prSS (precursor of the RuBisCO small subunit) interacts with these complexes. The TOC complex contains a specific subset of polar lipids such as digalactosyldiacylglyceride (DGDG), phosphatidylcholine (PC) and phosphatidylglycerol (PG). Interacts with SP1. Requires Mg(2+) as cofactor. Phosphorylated by KOC1.

It localises to the plastid. The protein resides in the chloroplast outer membrane. It is found in the cytoplasm. Functionally, GTPase involved in protein precursor import into chloroplasts. Seems to recognize chloroplast-destined precursor proteins and regulate their presentation to the translocation channel through GTP hydrolysis. Required for chloroplast biogenesis. Probably specialized in the import of nuclear encoded photosynthetic preproteins from the cytoplasm to the chloroplast. The sequence is that of Translocase of chloroplast 159, chloroplastic from Arabidopsis thaliana (Mouse-ear cress).